Consider the following 148-residue polypeptide: SsrA-binding protein (148 aa).

Belongs to the SmpB family.

The protein resides in the cytoplasm. Required for rescue of stalled ribosomes mediated by trans-translation. Binds to transfer-messenger RNA (tmRNA), required for stable association of tmRNA with ribosomes. tmRNA and SmpB together mimic tRNA shape, replacing the anticodon stem-loop with SmpB. tmRNA is encoded by the ssrA gene; the 2 termini fold to resemble tRNA(Ala) and it encodes a 'tag peptide', a short internal open reading frame. During trans-translation Ala-aminoacylated tmRNA acts like a tRNA, entering the A-site of stalled ribosomes, displacing the stalled mRNA. The ribosome then switches to translate the ORF on the tmRNA; the nascent peptide is terminated with the 'tag peptide' encoded by the tmRNA and targeted for degradation. The ribosome is freed to recommence translation, which seems to be the essential function of trans-translation. This is SsrA-binding protein from Ehrlichia canis (strain Jake).